The chain runs to 532 residues: CTP synthase (532 aa).

The tract at residues 1–267 (MAKFIFVTGG…QDIIIEQLQL (267 aa)) is amidoligase domain. S13 is a binding site for CTP. S13 lines the UTP pocket. 14–19 (GLGKGI) is a binding site for ATP. Residue Y54 participates in L-glutamine binding. Position 71 (D71) interacts with ATP. Mg(2+) is bound by residues D71 and E141. CTP-binding positions include 148–150 (DIE), 188–193 (KTKPIQ), and K224. UTP is bound by residues 188-193 (KTKPIQ) and K224. A Glutamine amidotransferase type-1 domain is found at 292-532 (EISFVGKYIE…FIKAIVENNK (241 aa)). G354 serves as a coordination point for L-glutamine. Residue C381 is the Nucleophile; for glutamine hydrolysis of the active site. Residues 382–385 (LGMQ), E405, and R461 each bind L-glutamine. Residues H506 and E508 contribute to the active site.

The protein belongs to the CTP synthase family. As to quaternary structure, homotetramer.

The enzyme catalyses UTP + L-glutamine + ATP + H2O = CTP + L-glutamate + ADP + phosphate + 2 H(+). It catalyses the reaction L-glutamine + H2O = L-glutamate + NH4(+). The catalysed reaction is UTP + NH4(+) + ATP = CTP + ADP + phosphate + 2 H(+). It participates in pyrimidine metabolism; CTP biosynthesis via de novo pathway; CTP from UDP: step 2/2. With respect to regulation, allosterically activated by GTP, when glutamine is the substrate; GTP has no effect on the reaction when ammonia is the substrate. The allosteric effector GTP functions by stabilizing the protein conformation that binds the tetrahedral intermediate(s) formed during glutamine hydrolysis. Inhibited by the product CTP, via allosteric rather than competitive inhibition. Catalyzes the ATP-dependent amination of UTP to CTP with either L-glutamine or ammonia as the source of nitrogen. Regulates intracellular CTP levels through interactions with the four ribonucleotide triphosphates. The protein is CTP synthase of Mycoplasma mycoides subsp. mycoides SC (strain CCUG 32753 / NCTC 10114 / PG1).